Consider the following 463-residue polypeptide: Chromosomal replication initiator protein DnaA (463 aa).

Residues 1–83 (MSTNQIILTD…LQLFQHYNNT (83 aa)) are domain I, interacts with DnaA modulators. The segment at 83–124 (TIKSIEIITKELPGITQTVIALPTKTFADIGSSELNAENIFS) is domain II. The interval 125–343 (TLDVRFTFDN…GALNKVIAHS (219 aa)) is domain III, AAA+ region. ATP contacts are provided by glycine 171, glycine 173, lysine 174, and threonine 175. The segment at 344-463 (NFTLKEITLE…INLLMKILQN (120 aa)) is domain IV, binds dsDNA.

Belongs to the DnaA family. As to quaternary structure, oligomerizes as a right-handed, spiral filament on DNA at oriC.

The protein resides in the cytoplasm. Plays an essential role in the initiation and regulation of chromosomal replication. ATP-DnaA binds to the origin of replication (oriC) to initiate formation of the DNA replication initiation complex once per cell cycle. Binds the DnaA box (a 9 base pair repeat at the origin) and separates the double-stranded (ds)DNA. Forms a right-handed helical filament on oriC DNA; dsDNA binds to the exterior of the filament while single-stranded (ss)DNA is stabiized in the filament's interior. The ATP-DnaA-oriC complex binds and stabilizes one strand of the AT-rich DNA unwinding element (DUE), permitting loading of DNA polymerase. After initiation quickly degrades to an ADP-DnaA complex that is not apt for DNA replication. Binds acidic phospholipids. The polypeptide is Chromosomal replication initiator protein DnaA (Rickettsia massiliae (strain Mtu5)).